The chain runs to 187 residues: Elongation factor P (187 aa).

Belongs to the elongation factor P family.

The protein resides in the cytoplasm. Its pathway is protein biosynthesis; polypeptide chain elongation. Involved in peptide bond synthesis. Stimulates efficient translation and peptide-bond synthesis on native or reconstituted 70S ribosomes in vitro. Probably functions indirectly by altering the affinity of the ribosome for aminoacyl-tRNA, thus increasing their reactivity as acceptors for peptidyl transferase. In Kocuria rhizophila (strain ATCC 9341 / DSM 348 / NBRC 103217 / DC2201), this protein is Elongation factor P.